A 104-amino-acid polypeptide reads, in one-letter code: Large ribosomal subunit protein uL24 (104 aa).

The protein belongs to the universal ribosomal protein uL24 family. Part of the 50S ribosomal subunit.

One of two assembly initiator proteins, it binds directly to the 5'-end of the 23S rRNA, where it nucleates assembly of the 50S subunit. Functionally, one of the proteins that surrounds the polypeptide exit tunnel on the outside of the subunit. This Methylorubrum extorquens (strain PA1) (Methylobacterium extorquens) protein is Large ribosomal subunit protein uL24.